A 472-amino-acid polypeptide reads, in one-letter code: Ras-GEF domain-containing family member 1B (472 aa).

One can recognise an N-terminal Ras-GEF domain in the interval 34-164 (QDNNLLSGSL…IIQNLIRKLA (131 aa)). Residues 204-452 (DPYTVAQQLT…YLASYESEGP (249 aa)) form the Ras-GEF domain.

Functionally, guanine nucleotide exchange factor (GEF) with specificity for rap2a and other Ras family proteins (in vitro). The polypeptide is Ras-GEF domain-containing family member 1B (rasgef1b) (Xenopus tropicalis (Western clawed frog)).